The sequence spans 342 residues: Fructose-1,6-bisphosphatase class 1 (342 aa).

Mg(2+)-binding residues include Glu91, Asp113, Leu115, and Asp116. Substrate is bound by residues 116-119 (DGSS), Asn211, and Lys277. Glu283 is a Mg(2+) binding site.

It belongs to the FBPase class 1 family. In terms of assembly, homotetramer. The cofactor is Mg(2+).

It localises to the cytoplasm. It catalyses the reaction beta-D-fructose 1,6-bisphosphate + H2O = beta-D-fructose 6-phosphate + phosphate. Its pathway is carbohydrate biosynthesis; gluconeogenesis. The sequence is that of Fructose-1,6-bisphosphatase class 1 from Bordetella petrii (strain ATCC BAA-461 / DSM 12804 / CCUG 43448).